We begin with the raw amino-acid sequence, 904 residues long: Protein translocase subunit SecA (904 aa).

ATP-binding positions include Q89, 107 to 111, and D502; that span reads GEGKT. 4 residues coordinate Zn(2+): C888, C890, C899, and H900.

It belongs to the SecA family. In terms of assembly, monomer and homodimer. Part of the essential Sec protein translocation apparatus which comprises SecA, SecYEG and auxiliary proteins SecDF-YajC and YidC. Requires Zn(2+) as cofactor.

Its subcellular location is the cell inner membrane. It is found in the cytoplasm. It carries out the reaction ATP + H2O + cellular proteinSide 1 = ADP + phosphate + cellular proteinSide 2.. Functionally, part of the Sec protein translocase complex. Interacts with the SecYEG preprotein conducting channel. Has a central role in coupling the hydrolysis of ATP to the transfer of proteins into and across the cell membrane, serving both as a receptor for the preprotein-SecB complex and as an ATP-driven molecular motor driving the stepwise translocation of polypeptide chains across the membrane. This is Protein translocase subunit SecA from Roseobacter denitrificans (strain ATCC 33942 / OCh 114) (Erythrobacter sp. (strain OCh 114)).